A 225-amino-acid chain; its full sequence is Single-pass membrane and coiled-coil domain-containing protein 3 (225 aa).

The stretch at 69 to 92 (IIQAMTKIQKELQKIDEALKDQLE) forms a coiled coil. Residues 155–175 (IGTSLLGSIGVAVLSLGIDMI) form a helical membrane-spanning segment. The stretch at 182–209 (AVERTQLQAAIKSYEKHLEEFKAASAKY) forms a coiled coil.

It localises to the membrane. The protein is Single-pass membrane and coiled-coil domain-containing protein 3 (Smco3) of Mus musculus (Mouse).